The following is a 597-amino-acid chain: Nuclear factor erythroid 2-related factor 2 (597 aa).

The DLG motif motif lies at 29 to 31 (DLG). S40 is modified (phosphoserine; by PKC). Positions 79–82 (ETGE) match the ETGE motif motif. A Phosphoserine modification is found at S207. The disordered stretch occupies residues 327–440 (TMEFNDSDSG…APFTKDKHSS (114 aa)). Over residues 333 to 345 (SDSGISLNTSPSR) the composition is skewed to polar residues. 3 N-linked (Glc) (glycation) lysine glycosylation sites follow: K454, K464, and K479. Residues 489–552 (LIRDIRRRGK…HLLKRRLSTL (64 aa)) enclose the bZIP domain. Residue R491 is glycosylated (N-linked (Glc) (glycation) arginine). A basic motif region spans residues 491 to 510 (RDIRRRGKNKVAAQNCRKRK). The interval 514 to 521 (IVELEQDL) is leucine-zipper. R561 carries N-linked (Glc) (glycation) arginine glycosylation. The segment at 563–597 (EDGKPYSPSEYSLQQTRDGNVFLVPKSKKPDTKKN) is disordered. Residue K566 is glycosylated (N-linked (Glc) (glycation) lysine). The span at 571-580 (SEYSLQQTRD) shows a compositional bias: polar residues. The mediates interaction with CHD6 and is necessary to activate transcription stretch occupies residues 583–588 (VFLVPK). N6-acetyllysine; by CREBBP occurs at positions 588 and 591.

The protein belongs to the bZIP family. CNC subfamily. In terms of assembly, heterodimer; heterodimerizes with small Maf proteins. Interacts (via the bZIP domain) with MAFG and MAFK; required for binding to antioxidant response elements (AREs) on DNA. Interacts with KEAP1; the interaction is direct and promotes ubiquitination by the BCR(KEAP1) E3 ubiquitin ligase complex. Forms a ternary complex with PGAM5 and KEAP1. Interacts with EEF1D at heat shock promoter elements (HSE). Interacts via its leucine-zipper domain with the coiled-coil domain of PMF1. Interacts with CHD6; involved in activation of the transcription. Interacts with ESRRB; represses NFE2L2 transcriptional activity. Interacts with MOTS-c, a peptide produced by the mitochondrially encoded 12S rRNA MT-RNR1; the interaction occurs in the nucleus following metabolic stress. Post-translationally, ubiquitinated in the cytoplasm by the BCR(KEAP1) E3 ubiquitin ligase complex leading to its degradation. In response to oxidative stress, electrophile metabolites, such as sulforaphane, modify KEAP1, leading to inhibit activity of the BCR(KEAP1) complex, promoting NFE2L2/NRF2 nuclear accumulation and activity. In response to autophagy, the BCR(KEAP1) complex is inactivated. Phosphorylated by EIF2AK3/PERK following unfolded protein response (UPR), promoting dissociation from its cytoplasmic inhibitor KEAP1, followed by its translocation into the nucleus. Phosphorylation of Ser-40 by PKC in response to oxidative stress dissociates NFE2L2 from its cytoplasmic inhibitor KEAP1, promoting its translocation into the nucleus. In terms of processing, acetylation at Lys-588 and Lys-591 increases nuclear localization whereas deacetylation by SIRT1 enhances cytoplasmic presence. Post-translationally, glycation impairs transcription factor activity by preventing heterodimerization with small Maf proteins. Deglycation by FN3K restores activity. In terms of tissue distribution, widely expressed. Highest expression in liver, skeletal muscle, luminal cells of the stomach and intestine, lining of the bronchi and alveoli, and in renal tubules; followed by heart, spleen, testis and brain.

The protein resides in the cytoplasm. Its subcellular location is the cytosol. It is found in the nucleus. In terms of biological role, transcription factor that plays a key role in the response to oxidative stress: binds to antioxidant response (ARE) elements present in the promoter region of many cytoprotective genes, such as phase 2 detoxifying enzymes, and promotes their expression, thereby neutralizing reactive electrophiles. In normal conditions, ubiquitinated and degraded in the cytoplasm by the BCR(KEAP1) complex. In response to oxidative stress, electrophile metabolites inhibit activity of the BCR(KEAP1) complex, promoting nuclear accumulation of NFE2L2/NRF2, heterodimerization with one of the small Maf proteins and binding to ARE elements of cytoprotective target genes. The NFE2L2/NRF2 pathway is also activated in response to selective autophagy: autophagy promotes interaction between KEAP1 and SQSTM1/p62 and subsequent inactivation of the BCR(KEAP1) complex, leading to NFE2L2/NRF2 nuclear accumulation and expression of cytoprotective genes. The NFE2L2/NRF2 pathway is also activated during the unfolded protein response (UPR), contributing to redox homeostasis and cell survival following endoplasmic reticulum stress. May also be involved in the transcriptional activation of genes of the beta-globin cluster by mediating enhancer activity of hypersensitive site 2 of the beta-globin locus control region. Also plays an important role in the regulation of the innate immune response. It is a critical regulator of the innate immune response and survival during sepsis by maintaining redox homeostasis and restraint of the dysregulation of pro-inflammatory signaling pathways like MyD88-dependent and -independent and TNF-alpha signaling. Suppresses macrophage inflammatory response by blocking pro-inflammatory cytokine transcription and the induction of IL6. Binds to the proximity of pro-inflammatory genes in macrophages and inhibits RNA Pol II recruitment. The inhibition is independent of the Nrf2-binding motif and reactive oxygen species level. Represses antiviral cytosolic DNA sensing by suppressing the expression of the adapter protein STING1 and decreasing responsiveness to STING1 agonists while increasing susceptibility to infection with DNA viruses. The sequence is that of Nuclear factor erythroid 2-related factor 2 from Mus musculus (Mouse).